A 79-amino-acid chain; its full sequence is Putative defensin-like protein 137 (79 aa).

An N-terminal signal peptide occupies residues 1-24; sequence MKKYFQPSFVILIIFTVLVLGVVG. 4 disulfides stabilise this stretch: Cys33–Cys78, Cys42–Cys62, Cys47–Cys72, and Cys51–Cys74.

This sequence belongs to the DEFL family.

It is found in the secreted. This chain is Putative defensin-like protein 137 (LCR14), found in Arabidopsis thaliana (Mouse-ear cress).